We begin with the raw amino-acid sequence, 63 residues long: Large ribosomal subunit protein bL32 (63 aa).

Belongs to the bacterial ribosomal protein bL32 family.

The polypeptide is Large ribosomal subunit protein bL32 (rpmF) (Aquifex aeolicus (strain VF5)).